Reading from the N-terminus, the 469-residue chain is UDP-N-acetylmuramate--L-alanine ligase (469 aa).

Position 122–128 (122–128 (GTHGKTT)) interacts with ATP.

The protein belongs to the MurCDEF family.

The protein resides in the cytoplasm. It catalyses the reaction UDP-N-acetyl-alpha-D-muramate + L-alanine + ATP = UDP-N-acetyl-alpha-D-muramoyl-L-alanine + ADP + phosphate + H(+). The protein operates within cell wall biogenesis; peptidoglycan biosynthesis. In terms of biological role, cell wall formation. This Legionella pneumophila (strain Lens) protein is UDP-N-acetylmuramate--L-alanine ligase.